A 275-amino-acid chain; its full sequence is Large ribosomal subunit protein uL2 (275 aa).

The tract at residues 222–275 (GVAMNPVDHPHGGGEGRNKGRHPTSPWGQKSKGLKTRHNKRTDNMIIRRRAKKK) is disordered. Basic and acidic residues predominate over residues 229–239 (DHPHGGGEGRN).

Belongs to the universal ribosomal protein uL2 family. As to quaternary structure, part of the 50S ribosomal subunit. Forms a bridge to the 30S subunit in the 70S ribosome.

In terms of biological role, one of the primary rRNA binding proteins. Required for association of the 30S and 50S subunits to form the 70S ribosome, for tRNA binding and peptide bond formation. It has been suggested to have peptidyltransferase activity; this is somewhat controversial. Makes several contacts with the 16S rRNA in the 70S ribosome. This Psychrobacter cryohalolentis (strain ATCC BAA-1226 / DSM 17306 / VKM B-2378 / K5) protein is Large ribosomal subunit protein uL2.